The sequence spans 674 residues: Sodium/myo-inositol cotransporter 2 (674 aa).

Residues 1-25 (MESSASSPPLTQSDPLEAFPRRTLE) are Extracellular-facing. A helical membrane pass occupies residues 26–46 (AGDIAVLVLYFLFVLAVGLWS). Topologically, residues 47 to 56 (TVKTKRDTVK) are cytoplasmic. The helical transmembrane segment at 57–77 (GYFLAGGNMLWWPVGASLFAS) threads the bilayer. The Extracellular segment spans residues 78 to 102 (NVGSGHFVGLAGSGAAAGLSVTAYE). The helical transmembrane segment at 103 to 123 (LNGLFFVLMLSWIFLPIYITG) threads the bilayer. The Cytoplasmic portion of the chain corresponds to 124–140 (QVTTMPEYLRKRFGGNR). The helical transmembrane segment at 141–161 (IPIILAVLYLFIYIFTKISVD) threads the bilayer. Residues 162 to 180 (MYAGAIFIQQSLHVNLYLA) lie on the Extracellular side of the membrane. Residues 181–201 (IVGLLAVTALYTIAGGLAAVI) form a helical membrane-spanning segment. The Cytoplasmic portion of the chain corresponds to 202-208 (YTDALQT). The chain crosses the membrane as a helical span at residues 209 to 229 (LIMLIGALILMGYSFAAVGGL). The Extracellular segment spans residues 230–272 (EGLEEKYFLAMASNRSGNSSCGLPREDAFHIFRDPVTSDLPWP). The chain crosses the membrane as a helical span at residues 273 to 293 (GILFGMSIPSLWYWCTDQVIV). Residues 294–308 (QRTLAAKNLSHAKGG) lie on the Cytoplasmic side of the membrane. A helical transmembrane segment spans residues 309–329 (SLMAAYLKVLPLFIMVFPGMV). Topologically, residues 330 to 374 (SRVLFPDEVACADPEICRKVCSNPAGCSDIAYPKLVLELLPTGLR) are extracellular. The helical transmembrane segment at 375 to 397 (GLMMAVMVAALTSSLTSIFNSAS) threads the bilayer. Residues 398 to 418 (TIFTMDLWNHLRPRASEKELM) are Cytoplasmic-facing. Residues 419–439 (IVGRVFVLLLVLVSILWIPVV) traverse the membrane as a helical segment. Over 440 to 446 (QASQGGQ) the chain is Extracellular. Residues 447–467 (LFIYIQSISSYLQPPVAVVFI) form a helical membrane-spanning segment. Over 468–479 (MGCFWKRANEKG) the chain is Cytoplasmic. A helical transmembrane segment spans residues 480 to 500 (AFFGLVLGLLLGLVRLILDFI). The Extracellular segment spans residues 501–521 (YVQPRCDQLDERPAVVKDVHY). A helical transmembrane segment spans residues 522–542 (LYFSMILSSVTLITVCAVSWF). Residues 543–653 (TEPPSKEMVS…SLEENPLVKT (111 aa)) are Cytoplasmic-facing. The tract at residues 567-589 (EQVPSATPPPLTLSQNGTPEASG) is disordered. The segment covering 578 to 589 (TLSQNGTPEASG) has biased composition (polar residues). The helical transmembrane segment at 654 to 674 (LLDLNLIICISCAIFLWGYFA) threads the bilayer.

The protein belongs to the sodium:solute symporter (SSF) (TC 2.A.21) family.

Its subcellular location is the membrane. The protein resides in the apical cell membrane. It carries out the reaction myo-inositol(out) + 2 Na(+)(out) = myo-inositol(in) + 2 Na(+)(in). The enzyme catalyses 1D-chiro-inositol(out) + 2 Na(+)(out) = 1D-chiro-inositol(in) + 2 Na(+)(in). The catalysed reaction is D-glucose(out) + 2 Na(+)(out) = D-glucose(in) + 2 Na(+)(in). It catalyses the reaction D-xylose(out) + 2 Na(+)(out) = D-xylose(in) + 2 Na(+)(in). With respect to regulation, MI transport activity inhibited by D-chiro-inositol (DCI), phlorizin (Pz) and sodium (Na(+)). Insulin increases D-chiro-inositol uptake. Its function is as follows. Involved in the sodium-dependent cotransport of myo-inositol (MI) with a Na(+):MI stoichiometry of 2:1. Exclusively responsible for apical MI transport and absorption in intestine. Can also transport D-chiro-inositol (DCI) but not L-fucose. Exhibits stereospecific cotransport of both D-glucose and D-xylose. May induce apoptosis through the TNF-alpha, PDCD1 pathway. May play a role in the regulation of MI concentration in serum, involving reabsorption in at least the proximal tubule of the kidney. The polypeptide is Sodium/myo-inositol cotransporter 2 (Bos taurus (Bovine)).